We begin with the raw amino-acid sequence, 473 residues long: Argininosuccinate lyase (473 aa).

This sequence belongs to the lyase 1 family. Argininosuccinate lyase subfamily.

It localises to the cytoplasm. It catalyses the reaction 2-(N(omega)-L-arginino)succinate = fumarate + L-arginine. Its pathway is amino-acid biosynthesis; L-arginine biosynthesis; L-arginine from L-ornithine and carbamoyl phosphate: step 3/3. The polypeptide is Argininosuccinate lyase (Bordetella pertussis (strain Tohama I / ATCC BAA-589 / NCTC 13251)).